The chain runs to 273 residues: ABC transporter glutamine-binding protein GlnH (273 aa).

The first 20 residues, 1–20 (MKKIFSLALISLFAVILLAA), serve as a signal peptide directing secretion. A lipid anchor (N-palmitoyl cysteine) is attached at cysteine 21. A lipid anchor (S-diacylglycerol cysteine) is attached at cysteine 21.

It belongs to the bacterial solute-binding protein 3 family. As to quaternary structure, the complex is composed of two ATP-binding proteins (GlnQ), two transmembrane proteins (GlnM and GlnP) and a solute-binding protein (GlnH).

The protein localises to the cell membrane. Part of the ABC transporter complex GlnHMPQ involved in glutamine transport. The sequence is that of ABC transporter glutamine-binding protein GlnH (glnH) from Bacillus subtilis (strain 168).